The sequence spans 566 residues: Intracellular exo-alpha-(1-&gt;5)-L-arabinofuranosidase (566 aa).

Over residues 1–12 (MTTHNSQYSAET) the composition is skewed to polar residues. Residues 1-39 (MTTHNSQYSAETTHPDKQESSPAPTAAGTTASNVSTTGN) form a disordered region. Over residues 20–32 (SSPAPTAAGTTAS) the composition is skewed to low complexity. 3 residues coordinate alpha-L-arabinofuranose: Glu-69, Asn-114, and Asn-214. Residue Glu-215 is the Proton donor/acceptor of the active site. Alpha-L-arabinofuranose is bound by residues Tyr-286, Glu-340, and Gln-409. Catalysis depends on Glu-340, which acts as the Nucleophile.

This sequence belongs to the glycosyl hydrolase 51 family. As to quaternary structure, homohexamer; trimer of dimers.

The protein resides in the cytoplasm. The enzyme catalyses Hydrolysis of terminal non-reducing alpha-L-arabinofuranoside residues in alpha-L-arabinosides.. Its pathway is glycan metabolism; L-arabinan degradation. Its activity is regulated as follows. Completely inhibited by Hg(2+) and Cu(2+) ions, whereas 1 mM Zn(2+) inhibited activity by 51%. Its function is as follows. Involved in the degradation of arabinan and is a key enzyme in the complete degradation of the plant cell wall. Catalyzes the cleavage of terminal alpha-(1-&gt;5)-arabinofuranosyl bonds in different hemicellulosic homopolysaccharides (branched and debranched arabinans). It is active with sugar beet arabinan and wheat arabinoxylan. It also exhibited activity against alpha-(1-&gt;5)-linked arabinobiose, arabinotriose, arabinotetraose, and arabinopentaose. This is Intracellular exo-alpha-(1-&gt;5)-L-arabinofuranosidase (abfB) from Bifidobacterium longum.